The sequence spans 21 residues: Hydroxypicolinic acid-activating enzyme (21 aa).

Functionally, involved in etamycin biosynthesis. In Streptomyces griseoviridis, this protein is Hydroxypicolinic acid-activating enzyme.